The following is a 272-amino-acid chain: 3-methyl-2-oxobutanoate hydroxymethyltransferase (272 aa).

Positions 42 and 86 each coordinate Mg(2+). 3-methyl-2-oxobutanoate is bound by residues 42-43 (DS), Asp86, and Lys116. Residue Glu118 participates in Mg(2+) binding. The Proton acceptor role is filled by Glu185.

The protein belongs to the PanB family. As to quaternary structure, homodecamer; pentamer of dimers. Mg(2+) is required as a cofactor.

Its subcellular location is the cytoplasm. The catalysed reaction is 3-methyl-2-oxobutanoate + (6R)-5,10-methylene-5,6,7,8-tetrahydrofolate + H2O = 2-dehydropantoate + (6S)-5,6,7,8-tetrahydrofolate. It functions in the pathway cofactor biosynthesis; (R)-pantothenate biosynthesis; (R)-pantoate from 3-methyl-2-oxobutanoate: step 1/2. Functionally, catalyzes the reversible reaction in which hydroxymethyl group from 5,10-methylenetetrahydrofolate is transferred onto alpha-ketoisovalerate to form ketopantoate. This Prochlorococcus marinus (strain MIT 9303) protein is 3-methyl-2-oxobutanoate hydroxymethyltransferase.